The primary structure comprises 196 residues: Phosphoheptose isomerase (196 aa).

The 163-residue stretch at 34 to 196 (MVQCLLGGKK…DRTLFPQDEA (163 aa)) folds into the SIS domain. Substrate is bound at residue 49–51 (NGG). Zn(2+) is bound by residues histidine 58 and glutamate 62. Substrate contacts are provided by residues glutamate 62, 91–92 (ND), 117–119 (STS), serine 122, and glutamine 172. Positions 172 and 180 each coordinate Zn(2+).

It belongs to the SIS family. GmhA subfamily. As to quaternary structure, homotetramer. It depends on Zn(2+) as a cofactor.

It is found in the cytoplasm. The catalysed reaction is 2 D-sedoheptulose 7-phosphate = D-glycero-alpha-D-manno-heptose 7-phosphate + D-glycero-beta-D-manno-heptose 7-phosphate. It participates in carbohydrate biosynthesis; D-glycero-D-manno-heptose 7-phosphate biosynthesis; D-glycero-alpha-D-manno-heptose 7-phosphate and D-glycero-beta-D-manno-heptose 7-phosphate from sedoheptulose 7-phosphate: step 1/1. In terms of biological role, catalyzes the isomerization of sedoheptulose 7-phosphate in D-glycero-D-manno-heptose 7-phosphate. In Shewanella denitrificans (strain OS217 / ATCC BAA-1090 / DSM 15013), this protein is Phosphoheptose isomerase.